A 367-amino-acid polypeptide reads, in one-letter code: Pepsin A (367 aa).

A propeptide spans 1 to 42 (activation peptide); it reads SIHRVPLKKGKSLRKQLKDHGLLEDFLKKHPYNPASKYHPVL. The region spanning 59-364 is the Peptidase A1 domain; it reads YYGTISIGTP…DRANNKVGLS (306 aa). The active site involves Asp77. Cys90 and Cys95 form a disulfide bridge. Residue Asn113 is glycosylated (N-linked (GlcNAc...) asparagine). A disulfide bridge links Cys251 with Cys255. Asp260 is a catalytic residue. A disulfide bond links Cys290 and Cys323.

It belongs to the peptidase A1 family.

The catalysed reaction is Preferential cleavage: hydrophobic, preferably aromatic, residues in P1 and P1' positions. Cleaves 1-Phe-|-Val-2, 4-Gln-|-His-5, 13-Glu-|-Ala-14, 14-Ala-|-Leu-15, 15-Leu-|-Tyr-16, 16-Tyr-|-Leu-17, 23-Gly-|-Phe-24, 24-Phe-|-Phe-25 and 25-Phe-|-Tyr-26 bonds in the B chain of insulin.. Shows particularly broad specificity; although bonds involving phenylalanine and leucine are preferred, many others are also cleaved to some extent. In Gallus gallus (Chicken), this protein is Pepsin A (PGA).